The primary structure comprises 251 residues: Aspartate/glutamate leucyltransferase (251 aa).

The protein belongs to the R-transferase family. Bpt subfamily.

It is found in the cytoplasm. The enzyme catalyses N-terminal L-glutamyl-[protein] + L-leucyl-tRNA(Leu) = N-terminal L-leucyl-L-glutamyl-[protein] + tRNA(Leu) + H(+). It catalyses the reaction N-terminal L-aspartyl-[protein] + L-leucyl-tRNA(Leu) = N-terminal L-leucyl-L-aspartyl-[protein] + tRNA(Leu) + H(+). Functionally, functions in the N-end rule pathway of protein degradation where it conjugates Leu from its aminoacyl-tRNA to the N-termini of proteins containing an N-terminal aspartate or glutamate. The sequence is that of Aspartate/glutamate leucyltransferase from Stenotrophomonas maltophilia (strain R551-3).